We begin with the raw amino-acid sequence, 542 residues long: Protein phosphatase 1G (542 aa).

Residue Gly2 is the site of N-myristoyl glycine attachment. Arg22 bears the Omega-N-methylarginine mark. Positions 26 to 502 (PYGFSAMQGW…DNMTCIIICF (477 aa)) constitute a PPM-type phosphatase domain. Residues Asp60 and Gly61 each coordinate Mn(2+). Disordered stretches follow at residues 118–139 (AGRP…DVDN) and 162–325 (QNCQ…SDSG). Phosphothreonine is present on Thr122. 2 stretches are compositionally biased toward acidic residues: residues 123-139 (EDED…DVDN) and 259-309 (DSED…DEEM). Residue Lys380 is modified to N6-acetyllysine. Asp438 and Asp493 together coordinate Mn(2+). Residues 510–542 (LQPESGKRKLEEALSTEGAEENGNSDKKKAKRD) form a disordered region. A Phosphoserine modification is found at Ser524.

The protein belongs to the PP2C family. In terms of assembly, interacts with NOL3; may dephosphorylate NOL3. Mg(2+) is required as a cofactor. The cofactor is Mn(2+).

It is found in the cytoplasm. It localises to the membrane. It carries out the reaction O-phospho-L-seryl-[protein] + H2O = L-seryl-[protein] + phosphate. It catalyses the reaction O-phospho-L-threonyl-[protein] + H2O = L-threonyl-[protein] + phosphate. The polypeptide is Protein phosphatase 1G (Rattus norvegicus (Rat)).